We begin with the raw amino-acid sequence, 759 residues long: 5-methyltetrahydropteroyltriglutamate--homocysteine methyltransferase (759 aa).

5-methyltetrahydropteroyltri-L-glutamate contacts are provided by residues 17–20 and Lys116; that span reads RELK. Residues 430-432 and Glu483 each bind L-homocysteine; that span reads IGS. L-methionine-binding positions include 430–432 and Glu483; that span reads IGS. Residues 514–515 and Trp560 contribute to the 5-methyltetrahydropteroyltri-L-glutamate site; that span reads RC. L-homocysteine is bound at residue Asp598. Asp598 contacts L-methionine. 5-methyltetrahydropteroyltri-L-glutamate is bound at residue Glu604. Positions 641, 643, and 665 each coordinate Zn(2+). The active-site Proton donor is the His694. A Zn(2+)-binding site is contributed by Cys726.

The protein belongs to the vitamin-B12 independent methionine synthase family. Zn(2+) serves as cofactor.

It catalyses the reaction 5-methyltetrahydropteroyltri-L-glutamate + L-homocysteine = tetrahydropteroyltri-L-glutamate + L-methionine. It participates in amino-acid biosynthesis; L-methionine biosynthesis via de novo pathway; L-methionine from L-homocysteine (MetE route): step 1/1. Its function is as follows. Catalyzes the transfer of a methyl group from 5-methyltetrahydrofolate to homocysteine resulting in methionine formation. In Lactococcus lactis subsp. lactis (strain IL1403) (Streptococcus lactis), this protein is 5-methyltetrahydropteroyltriglutamate--homocysteine methyltransferase.